The following is a 366-amino-acid chain: ATPase ASNA1 homolog (366 aa).

Residue 33–40 (KGGVGKTT) participates in ATP binding. Residue Asp62 is part of the active site. The ATP site is built by Glu234 and Asn261.

This sequence belongs to the arsA ATPase family. As to quaternary structure, homodimer.

It localises to the cytoplasm. It is found in the endoplasmic reticulum. In terms of biological role, ATPase required for the post-translational delivery of tail-anchored (TA) proteins to the endoplasmic reticulum. Recognizes and selectively binds the transmembrane domain of TA proteins in the cytosol. This complex then targets to the endoplasmic reticulum by membrane-bound receptors, where the tail-anchored protein is released for insertion. This process is regulated by ATP binding and hydrolysis. ATP binding drives the homodimer towards the closed dimer state, facilitating recognition of newly synthesized TA membrane proteins. ATP hydrolysis is required for insertion. Subsequently, the homodimer reverts towards the open dimer state, lowering its affinity for the membrane-bound receptor, and returning it to the cytosol to initiate a new round of targeting. The polypeptide is ATPase ASNA1 homolog (Cryptosporidium parvum (strain Iowa II)).